The primary structure comprises 792 residues: Leucine--tRNA ligase (792 aa).

Positions 39-50 (PYPSAAGLHLGH) match the 'HIGH' region motif. Residues 569-573 (KMSKS) carry the 'KMSKS' region motif. Lys-572 is a binding site for ATP.

It belongs to the class-I aminoacyl-tRNA synthetase family.

The protein localises to the cytoplasm. It carries out the reaction tRNA(Leu) + L-leucine + ATP = L-leucyl-tRNA(Leu) + AMP + diphosphate. The chain is Leucine--tRNA ligase from Mycoplasma genitalium (strain ATCC 33530 / DSM 19775 / NCTC 10195 / G37) (Mycoplasmoides genitalium).